A 188-amino-acid chain; its full sequence is Peptidyl-tRNA hydrolase (188 aa).

F14 is a binding site for tRNA. H19 functions as the Proton acceptor in the catalytic mechanism. Residues Y64, N66, and N112 each coordinate tRNA.

This sequence belongs to the PTH family. Monomer.

It is found in the cytoplasm. The enzyme catalyses an N-acyl-L-alpha-aminoacyl-tRNA + H2O = an N-acyl-L-amino acid + a tRNA + H(+). In terms of biological role, hydrolyzes ribosome-free peptidyl-tRNAs (with 1 or more amino acids incorporated), which drop off the ribosome during protein synthesis, or as a result of ribosome stalling. Catalyzes the release of premature peptidyl moieties from peptidyl-tRNA molecules trapped in stalled 50S ribosomal subunits, and thus maintains levels of free tRNAs and 50S ribosomes. The sequence is that of Peptidyl-tRNA hydrolase from Onion yellows phytoplasma (strain OY-M).